The sequence spans 1857 residues: Phosphatidylinositol 3-kinase 2 (1857 aa).

Composition is skewed to low complexity over residues 1–32 (MKMS…SNGS) and 42–55 (NLSV…SNNS). Disordered regions lie at residues 1–61 (MKMS…KSST), 145–313 (TPLN…TNRV), 348–468 (SSSK…NSIR), 481–512 (ISSN…GERV), and 530–573 (ESDI…GPNV). Polar residues predominate over residues 145–155 (TPLNRSRSGSI). Over residues 162–269 (NNLTSSSSSS…NNNNNNNSNS (108 aa)) the composition is skewed to low complexity. The segment covering 270-281 (GGSSRMITSKSQ) has biased composition (polar residues). 2 stretches are compositionally biased toward low complexity: residues 288 to 311 (TSNT…TPTN) and 352 to 464 (LLIP…QPSN). The span at 533 to 560 (ISSSPRSIGSPNSIRASISSQLPPSLSS) shows a compositional bias: low complexity. The segment covering 561-570 (IGGGGGGGSG) has biased composition (gly residues). The PI3K-RBD domain maps to 821 to 934 (PNKITIMVLL…NQTVELSLTN (114 aa)). Residues 996-1078 (KETNKENKDS…SGSGNGSEQP (83 aa)) are disordered. A compositionally biased stretch (basic and acidic residues) spans 997-1011 (ETNKENKDSNKENKD). A compositionally biased stretch (low complexity) spans 1012–1056 (SSSNNNNNNNNNNNNNNNNNNNNNNNNNNNGNNNGNNSNNNSNSN). In terms of domain architecture, C2 PI3K-type spans 1099-1271 (VKRLFRVNIA…QPIILLVEFE (173 aa)). A PIK helical domain is found at 1326-1503 (PVGLKKLDLD…GLLLEGYLRS (178 aa)). The PI3K/PI4K catalytic domain maps to 1568-1845 (IIDKCRYMDS…NISVALNTKT (278 aa)). Positions 1574 to 1580 (YMDSKKL) are G-loop. The segment at 1711–1719 (GIGDRHSDN) is catalytic loop. The activation loop stretch occupies residues 1730 to 1756 (HIDFGHFLGNYKKKYGFKRERAPFIFT).

This sequence belongs to the PI3/PI4-kinase family.

The catalysed reaction is a 1,2-diacyl-sn-glycero-3-phospho-(1D-myo-inositol) + ATP = a 1,2-diacyl-sn-glycero-3-phospho-(1D-myo-inositol-3-phosphate) + ADP + H(+). This chain is Phosphatidylinositol 3-kinase 2 (pikB), found in Dictyostelium discoideum (Social amoeba).